The chain runs to 1073 residues: Error-prone DNA polymerase (1073 aa).

Residues 41 to 73 form a disordered region; it reads EAEPECLSTPRPGPGSTEVPGERRGSRQGERSG. Basic and acidic residues predominate over residues 60-73; the sequence is PGERRGSRQGERSG.

It belongs to the DNA polymerase type-C family. DnaE2 subfamily.

The protein localises to the cytoplasm. It carries out the reaction DNA(n) + a 2'-deoxyribonucleoside 5'-triphosphate = DNA(n+1) + diphosphate. DNA polymerase involved in damage-induced mutagenesis and translesion synthesis (TLS). It is not the major replicative DNA polymerase. The sequence is that of Error-prone DNA polymerase from Corynebacterium efficiens (strain DSM 44549 / YS-314 / AJ 12310 / JCM 11189 / NBRC 100395).